A 185-amino-acid chain; its full sequence is Ribosome-recycling factor (185 aa).

The protein belongs to the RRF family.

It localises to the cytoplasm. Its function is as follows. Responsible for the release of ribosomes from messenger RNA at the termination of protein biosynthesis. May increase the efficiency of translation by recycling ribosomes from one round of translation to another. The polypeptide is Ribosome-recycling factor (Xanthomonas euvesicatoria pv. vesicatoria (strain 85-10) (Xanthomonas campestris pv. vesicatoria)).